A 401-amino-acid polypeptide reads, in one-letter code: Chaperone protein DnaJ (401 aa).

A J domain is found at 4–69 (DYYEVLGVSR…DKRRRYDQFG (66 aa)). The segment at 156–237 (GVEKTLKIKK…CYGEGIKQGD (82 aa)) adopts a CR-type zinc-finger fold. Residues Cys-169, Cys-172, Cys-185, Cys-188, Cys-211, Cys-214, Cys-225, and Cys-228 each coordinate Zn(2+). CXXCXGXG motif repeat units follow at residues 169-176 (CKECNGSG), 185-192 (CQTCHGSG), 211-218 (CPTCGGEG), and 225-232 (CTACYGEG). The segment at 377-401 (AFSPSGSNNDKEEKSFFEKARDIFS) is disordered. A compositionally biased stretch (basic and acidic residues) spans 385–401 (NDKEEKSFFEKARDIFS).

This sequence belongs to the DnaJ family. In terms of assembly, homodimer. It depends on Zn(2+) as a cofactor.

Its subcellular location is the cytoplasm. Participates actively in the response to hyperosmotic and heat shock by preventing the aggregation of stress-denatured proteins and by disaggregating proteins, also in an autonomous, DnaK-independent fashion. Unfolded proteins bind initially to DnaJ; upon interaction with the DnaJ-bound protein, DnaK hydrolyzes its bound ATP, resulting in the formation of a stable complex. GrpE releases ADP from DnaK; ATP binding to DnaK triggers the release of the substrate protein, thus completing the reaction cycle. Several rounds of ATP-dependent interactions between DnaJ, DnaK and GrpE are required for fully efficient folding. Also involved, together with DnaK and GrpE, in the DNA replication of plasmids through activation of initiation proteins. This is Chaperone protein DnaJ from Chlorobium limicola (strain DSM 245 / NBRC 103803 / 6330).